A 416-amino-acid polypeptide reads, in one-letter code: Glutamyl-tRNA reductase (416 aa).

Substrate contacts are provided by residues 49 to 52 (TCNR), Ser-105, 110 to 112 (EPQ), and Gln-116. The active-site Nucleophile is Cys-50. 185-190 (GAGETI) is an NADP(+) binding site.

This sequence belongs to the glutamyl-tRNA reductase family. Homodimer.

The enzyme catalyses (S)-4-amino-5-oxopentanoate + tRNA(Glu) + NADP(+) = L-glutamyl-tRNA(Glu) + NADPH + H(+). The protein operates within porphyrin-containing compound metabolism; protoporphyrin-IX biosynthesis; 5-aminolevulinate from L-glutamyl-tRNA(Glu): step 1/2. In terms of biological role, catalyzes the NADPH-dependent reduction of glutamyl-tRNA(Glu) to glutamate 1-semialdehyde (GSA). The protein is Glutamyl-tRNA reductase of Shewanella frigidimarina (strain NCIMB 400).